We begin with the raw amino-acid sequence, 98 residues long: Keratin, high sulfur matrix protein, IIIB4 (98 aa).

The residue at position 1 (A1) is an N-acetylalanine.

This sequence belongs to the KRTAP type 3 family. Interacts with wool keratins. Wool.

In the wool cortex, wool keratin intermediate filaments are embedded in an interfilamentous matrix, consisting of hair keratin-associated proteins (KRTAP), which are essential for the formation of a rigid and resistant wool shaft through their extensive disulfide bond cross-linking with abundant cysteine residues of wool keratins. The matrix proteins include the high-sulfur and high-glycine-tyrosine keratins. This chain is Keratin, high sulfur matrix protein, IIIB4, found in Ovis aries (Sheep).